We begin with the raw amino-acid sequence, 413 residues long: Multifunctional CCA protein (413 aa).

Gly-8 and Arg-11 together coordinate ATP. Gly-8 and Arg-11 together coordinate CTP. Mg(2+) contacts are provided by Asp-21 and Asp-23. ATP is bound by residues Arg-91, Arg-137, and Arg-140. CTP contacts are provided by Arg-91, Arg-137, and Arg-140. The 102-residue stretch at Thr-228–Trp-329 folds into the HD domain.

This sequence belongs to the tRNA nucleotidyltransferase/poly(A) polymerase family. Bacterial CCA-adding enzyme type 1 subfamily. In terms of assembly, monomer. Can also form homodimers and oligomers. Mg(2+) serves as cofactor. The cofactor is Ni(2+).

It catalyses the reaction a tRNA precursor + 2 CTP + ATP = a tRNA with a 3' CCA end + 3 diphosphate. The enzyme catalyses a tRNA with a 3' CCA end + 2 CTP + ATP = a tRNA with a 3' CCACCA end + 3 diphosphate. Its function is as follows. Catalyzes the addition and repair of the essential 3'-terminal CCA sequence in tRNAs without using a nucleic acid template. Adds these three nucleotides in the order of C, C, and A to the tRNA nucleotide-73, using CTP and ATP as substrates and producing inorganic pyrophosphate. tRNA 3'-terminal CCA addition is required both for tRNA processing and repair. Also involved in tRNA surveillance by mediating tandem CCA addition to generate a CCACCA at the 3' terminus of unstable tRNAs. While stable tRNAs receive only 3'-terminal CCA, unstable tRNAs are marked with CCACCA and rapidly degraded. This is Multifunctional CCA protein from Salmonella typhi.